The primary structure comprises 968 residues: Alanine--tRNA ligase, cytoplasmic (968 aa).

M1 carries the N-acetylmethionine modification. ATP-binding positions include R77, H95, W176, and 214 to 216 (IWN). Residues N216 and D239 each coordinate L-alanine. Residue G243 participates in ATP binding. A phosphoserine mark is found at S399 and S555. Residues H605, H609, C723, and H727 each coordinate Zn(2+). The Nuclear localization signal motif lies at 750–763 (RRIVAVTGAEAQKA). K876 bears the N6-acetyllysine mark. K943 bears the N6,N6,N6-trimethyllysine; alternate mark. K943 bears the N6,N6-dimethyllysine; alternate mark. An N6-methyllysine; alternate modification is found at K943.

Belongs to the class-II aminoacyl-tRNA synthetase family. As to quaternary structure, monomer. Interacts with ANKRD16; the interaction is direct. The cofactor is Zn(2+). Post-translationally, ISGylated. Methylation at 'Lys-943' by METTL21C.

The protein resides in the cytoplasm. The protein localises to the nucleus. The enzyme catalyses tRNA(Ala) + L-alanine + ATP = L-alanyl-tRNA(Ala) + AMP + diphosphate. It carries out the reaction (S)-lactate + ATP + H(+) = (S)-lactoyl-AMP + diphosphate. The catalysed reaction is (S)-lactoyl-AMP + L-lysyl-[protein] = N(6)-[(S)-lactoyl]-L-lysyl-[protein] + AMP + 2 H(+). With respect to regulation, the protein lactyltransferase activity is inhibited by beta-alanine. In terms of biological role, catalyzes the attachment of alanine to tRNA(Ala) in a two-step reaction: alanine is first activated by ATP to form Ala-AMP and then transferred to the acceptor end of tRNA(Ala). Also edits incorrectly charged tRNA(Ala) via its editing domain. In presence of high levels of lactate, also acts as a protein lactyltransferase that mediates lactylation of lysine residues in target proteins, such as TEAD1, TP53/p53 and YAP1. Protein lactylation takes place in a two-step reaction: lactate is first activated by ATP to form lactate-AMP and then transferred to lysine residues of target proteins. Acts as an inhibitor of TP53/p53 activity by catalyzing lactylation of TP53/p53. Acts as a positive regulator of the Hippo pathway by mediating lactylation of TEAD1 and YAP1. The protein is Alanine--tRNA ligase, cytoplasmic of Mus musculus (Mouse).